The following is a 226-amino-acid chain: Glycerol-3-phosphate acyltransferase (226 aa).

A run of 6 helical transmembrane segments spans residues 1–21 (MGFWLSLCGAVVLVAYLLGSF), 60–80 (FVLGLDCLKGVLAIALVYYLF), 102–122 (LVTLAGIAAILGHSKSIFLGF), 134–154 (ILLAMNWQVGLATFGVFAVVV), 159–178 (IVSLSSIMGAIAVSIVMVFL), and 182–197 (LPYILFGIAGGLYVIL).

This sequence belongs to the PlsY family. As to quaternary structure, probably interacts with PlsX.

The protein localises to the cell inner membrane. The enzyme catalyses an acyl phosphate + sn-glycerol 3-phosphate = a 1-acyl-sn-glycero-3-phosphate + phosphate. The protein operates within lipid metabolism; phospholipid metabolism. Catalyzes the transfer of an acyl group from acyl-phosphate (acyl-PO(4)) to glycerol-3-phosphate (G3P) to form lysophosphatidic acid (LPA). This enzyme utilizes acyl-phosphate as fatty acyl donor, but not acyl-CoA or acyl-ACP. The chain is Glycerol-3-phosphate acyltransferase from Nostoc sp. (strain PCC 7120 / SAG 25.82 / UTEX 2576).